Reading from the N-terminus, the 391-residue chain is Phosphoglycerate kinase (391 aa).

Residues 21-23 (DFN), Arg-41, 64-67 (HLGR), Arg-121, and Arg-154 each bind substrate. ATP contacts are provided by residues Lys-205, Glu-322, and 348 to 351 (GGDS).

This sequence belongs to the phosphoglycerate kinase family. As to quaternary structure, monomer.

The protein resides in the cytoplasm. It carries out the reaction (2R)-3-phosphoglycerate + ATP = (2R)-3-phospho-glyceroyl phosphate + ADP. Its pathway is carbohydrate degradation; glycolysis; pyruvate from D-glyceraldehyde 3-phosphate: step 2/5. This is Phosphoglycerate kinase from Solibacter usitatus (strain Ellin6076).